A 198-amino-acid polypeptide reads, in one-letter code: uncharacterized protein (198 aa).

This is an uncharacterized protein from Acheta domesticus (House cricket).